The sequence spans 318 residues: Putative HTH-type transcriptional regulatory protein TK0539 (318 aa).

Positions 131–189 (LRELREKHGYSVNELAQLLGVSRKSLLNYERGEQAVSLDVAIQLEEIFDEALAEPIDIL) constitute an HTH cro/C1-type domain. The H-T-H motif DNA-binding region spans 142 to 161 (VNELAQLLGVSRKSLLNYER).

The protein is Putative HTH-type transcriptional regulatory protein TK0539 of Thermococcus kodakarensis (strain ATCC BAA-918 / JCM 12380 / KOD1) (Pyrococcus kodakaraensis (strain KOD1)).